A 454-amino-acid chain; its full sequence is MKLKTKIHLYTSISLLILLILVHTAVYLIFSSALTSKDAARLADETDNIAEALRAAETEGVALQDMLQAYLPANGMVRVVNGDQKAVMTITKEKAYKDFPLSFHSGETADVRKPDGKLFAEAAVPVIWTDGQVVSLQLVERLENTEESLFLLKIILIAASAAVCIASFFAGSLLARRIINPIRRLMITMKDIQRDKEFKTISLEGQSNDELYQMGLTFNEMAMMLKEHYDKQQQFVQDASHELKTPLTIIESYSSLMKRWGAKKPEVLEESIEAIHSEAVHMKKLTNQLLALAKSHQGLEVDLKTIDLIKAARAVMQTLQSVYQRDILLETDKESLLVKADEERIKQLLTILLDNAIKYSEKPIEMSAGTRNGRPFLSVRDEGIGIPEEHIPHLFERFYRADEARNRKTGGTGLGLSIAKQIADEHGIELSVKSKPGQGTAVTMQFSEQNGGGR.

Over 1 to 12 the chain is Cytoplasmic; it reads MKLKTKIHLYTS. Residues 13 to 33 traverse the membrane as a helical segment; it reads ISLLILLILVHTAVYLIFSSA. At 34 to 153 the chain is on the extracellular side; the sequence is LTSKDAARLA…NTEESLFLLK (120 aa). A helical membrane pass occupies residues 154-174; sequence IILIAASAAVCIASFFAGSLL. At 175–454 the chain is on the cytoplasmic side; it reads ARRIINPIRR…QFSEQNGGGR (280 aa). An HAMP domain is found at 176–230; that stretch reads RRIINPIRRLMITMKDIQRDKEFKTISLEGQSNDELYQMGLTFNEMAMMLKEHYD. In terms of domain architecture, Histidine kinase spans 238-450; sequence DASHELKTPL…AVTMQFSEQN (213 aa). Residue His241 is modified to Phosphohistidine; by autocatalysis.

It is found in the cell membrane. It carries out the reaction ATP + protein L-histidine = ADP + protein N-phospho-L-histidine.. Probable member of the two-component regulatory system YkoH/YkoG. Potentially phosphorylates YkoG. This is Sensor histidine kinase YkoH (ykoH) from Bacillus subtilis (strain 168).